Reading from the N-terminus, the 1830-residue chain is Guanine nucleotide exchange factor SPIKE 1 (1830 aa).

An N-acetylmethionine modification is found at methionine 1. The disordered stretch occupies residues 285–304; the sequence is NTGESASPSSPLAPSMTASS. A compositionally biased stretch (low complexity) spans 289–304; it reads SASPSSPLAPSMTASS. Positions 463–622 constitute a C2 DOCK-type domain; it reads FHCLYVYPVA…NIFKLRLRLC (160 aa). Position 1051 is a phosphoserine (serine 1051). The residue at position 1079 (threonine 1079) is a Phosphothreonine. Serine 1095 bears the Phosphoserine mark. Residues 1379–1828 form the DOCKER domain; that stretch reads MAFAPVPDLH…LSHYIPAILS (450 aa).

It belongs to the DOCK family. In terms of assembly, homodimer. Component of SCAR/WAVE and ARP2/3 complexes. Interacts directly with ARAC4/ROP2, ARAC1/ROP3, ARAC5/ROP4, ARAC6/ROP5, ARAC8/ROP10, ARAC9/ROP8, SCAR1, SCAR2, SCAR3, SCAR4, ABI1, ABI2, ABI3 and ABI4. Binds to the inactive GDP-bound form of ARAC3/ROP6. In terms of tissue distribution, expressed ubiquitously, in roots and aerial organs.

It is found in the cytoplasm. The protein resides in the endoplasmic reticulum membrane. It localises to the nucleus. Guanine nucleotide exchange factor (GEF) for Rho and Rac. GEF proteins activate small GTPases by exchanging bound GDP for free GTP. Controls actin polymerization via the two heteromeric complexes WAVE and actin-related protein (ARP) 2/3. Involved in cytoskeletal reorganization required for cell shape (e.g. trichome and cotyledon) control and tissue development. Prevents cortical microtubules organization into parallel arrays oriented perpendicular to the axis of cell elongation to limit anisotropic cell growth during petal development, probably by triggering ARAC4/ROP2 and ARAC3/ROP6 activity. Promotes polarized growth and cell-cell adhesion in the leaf epidermis probably by promoting the formation of endoplasmic reticulum (ER) exit site (ERES) and/or trafficking between the ER and Golgi. Triggers ARAC3/ROP6 activation required for auxin-mediated inhibition of PIN2 internalization during gravitropic responses (, PubMed:22683260). The polypeptide is Guanine nucleotide exchange factor SPIKE 1 (Arabidopsis thaliana (Mouse-ear cress)).